The primary structure comprises 192 residues: Iron sulfur cluster assembly protein 1, mitochondrial (192 aa).

Residues 1 to 53 constitute a mitochondrion transit peptide; sequence MSVFRRSVQCVGVLPSILAQRSSLLARPANLQFLKTNSSKFVPQVTANVSRRM.

It belongs to the NifU family. In terms of assembly, homodimer. Component of the core Fe-S cluster (ISC) assembly machinery. Requires [2Fe-2S] cluster as cofactor.

It is found in the mitochondrion. It localises to the mitochondrion matrix. The protein operates within cofactor biosynthesis; iron-sulfur cluster biosynthesis. Its function is as follows. Scaffold protein for the de novo synthesis of iron-sulfur (Fe-S) clusters within mitochondria, which is required for maturation of both mitochondrial and cytoplasmic [2Fe-2S] and [4Fe-4S] proteins. First, a [2Fe-2S] cluster is transiently assembled on the scaffold protein isu1. In a second step, the cluster is released from isu1, transferred to a glutaredoxin, followed by the formation of mitochondrial [2Fe-2S] proteins, the synthesis of [4Fe-4S] clusters and their target-specific insertion into the recipient apoproteins. Cluster assembly on isu1 depends on the function of the cysteine desulfurase complex nfs1-isd11, which serves as the sulfur donor for cluster synthesis, the iron-binding protein frataxin as the putative iron donor, and the electron transfer chain comprised of ferredoxin reductase and ferredoxin, which receive their electrons from NADH. In Schizosaccharomyces pombe (strain 972 / ATCC 24843) (Fission yeast), this protein is Iron sulfur cluster assembly protein 1, mitochondrial (isu1).